Reading from the N-terminus, the 300-residue chain is GTPase Era (300 aa).

In terms of domain architecture, Era-type G spans 4 to 172 (KSGFVALAGK…LEKIKEELPE (169 aa)). The interval 12-19 (GKPNVGKS) is G1. A GTP-binding site is contributed by 12-19 (GKPNVGKS). Positions 38–42 (QTTRN) are G2. The tract at residues 59 to 62 (DTPG) is G3. GTP is bound by residues 59–63 (DTPGI) and 121–124 (NKID). The interval 121-124 (NKID) is G4. The tract at residues 151–153 (ISA) is G5. The KH type-2 domain occupies 195 to 280 (IREKIFHLTR…YLDLNVKVKE (86 aa)).

It belongs to the TRAFAC class TrmE-Era-EngA-EngB-Septin-like GTPase superfamily. Era GTPase family. Monomer.

It is found in the cytoplasm. Its subcellular location is the cell inner membrane. Functionally, an essential GTPase that binds both GDP and GTP, with rapid nucleotide exchange. Plays a role in 16S rRNA processing and 30S ribosomal subunit biogenesis and possibly also in cell cycle regulation and energy metabolism. This chain is GTPase Era, found in Thermotoga maritima (strain ATCC 43589 / DSM 3109 / JCM 10099 / NBRC 100826 / MSB8).